Consider the following 160-residue polypeptide: Epithelial membrane protein 1 (160 aa).

The helical transmembrane segment at 1–21 threads the bilayer; it reads MLVLLAAIFVVHIATCVMLFV. 2 N-linked (GlcNAc...) asparagine glycosylation sites follow: asparagine 35 and asparagine 43. A run of 3 helical transmembrane segments spans residues 67–87, 95–115, and 137–157; these read FMIL…FQLF, FFLS…GASI, and FILA…YLVL.

Belongs to the PMP-22/EMP/MP20 family. In terms of tissue distribution, most abundant in squamous epithelia.

It localises to the membrane. This is Epithelial membrane protein 1 (EMP1) from Oryctolagus cuniculus (Rabbit).